The primary structure comprises 366 residues: Chorismate synthase (366 aa).

Residues arginine 48 and arginine 54 each contribute to the NADP(+) site. FMN-binding positions include 125–127 (RSS), 238–239 (NA), glycine 278, 293–297 (KPTSS), and arginine 319.

The protein belongs to the chorismate synthase family. In terms of assembly, homotetramer. FMNH2 serves as cofactor.

The catalysed reaction is 5-O-(1-carboxyvinyl)-3-phosphoshikimate = chorismate + phosphate. The protein operates within metabolic intermediate biosynthesis; chorismate biosynthesis; chorismate from D-erythrose 4-phosphate and phosphoenolpyruvate: step 7/7. In terms of biological role, catalyzes the anti-1,4-elimination of the C-3 phosphate and the C-6 proR hydrogen from 5-enolpyruvylshikimate-3-phosphate (EPSP) to yield chorismate, which is the branch point compound that serves as the starting substrate for the three terminal pathways of aromatic amino acid biosynthesis. This reaction introduces a second double bond into the aromatic ring system. The sequence is that of Chorismate synthase from Herminiimonas arsenicoxydans.